The sequence spans 81 residues: HssA/B-like protein 5 (81 aa).

It belongs to the hssA/B family.

The protein is HssA/B-like protein 5 (hssl5) of Dictyostelium discoideum (Social amoeba).